The sequence spans 90 residues: MKILIFIIASFMLIGVECKEGYPTNSEGCKITCLFNDPYCKGKCINLSTQADKKWKGVEGYCNRRDIACYCKNLPENAEVWDPNNNKCVG.

The signal sequence occupies residues Met1 to Cys18. The LCN-type CS-alpha/beta domain occupies Lys19–Val89. Intrachain disulfides connect Cys29-Cys88, Cys33-Cys62, Cys40-Cys69, and Cys44-Cys71.

Belongs to the long (4 C-C) scorpion toxin superfamily. Sodium channel inhibitor family. Beta subfamily. In terms of tissue distribution, expressed by the venom gland.

It localises to the secreted. Beta toxins bind voltage-independently at site-4 of sodium channels (Nav) and shift the voltage of activation toward more negative potentials thereby affecting sodium channel activation and promoting spontaneous and repetitive firing. The protein is Putative beta-neurotoxin RjAa14F of Rhopalurus junceus (Caribbean blue scorpion).